A 176-amino-acid chain; its full sequence is Ribosome rescue factor SmrB (176 aa).

The segment at 29-51 is disordered; that stretch reads TIIQQPKKNTKQKEIKRSNREAS. Basic and acidic residues predominate over residues 39 to 51; that stretch reads KQKEIKRSNREAS. In terms of domain architecture, Smr spans 97 to 172; sequence LDMHGMTQQE…GDGALLVLLS (76 aa).

This sequence belongs to the SmrB family. In terms of assembly, associates with collided ribosomes, but not with correctly translating polysomes.

Its function is as follows. Acts as a ribosome collision sensor. Detects stalled/collided disomes (pairs of ribosomes where the leading ribosome is stalled and a second ribosome has collided with it) and endonucleolytically cleaves mRNA at the 5' boundary of the stalled ribosome. Stalled/collided disomes form a new interface (primarily via the 30S subunits) that binds SmrB. Cleaved mRNA becomes available for tmRNA ligation, leading to ribosomal subunit dissociation and rescue of stalled ribosomes. This Vibrio parahaemolyticus serotype O3:K6 (strain RIMD 2210633) protein is Ribosome rescue factor SmrB.